The sequence spans 171 residues: MHHVVSATTNPAKIQAILQAFNEIFGEGSCHIESVSVESGVPEQPFGSEETRAGARNRVANARLVQPSADFWVAIEAGIDDGSTFSWVVIESADRRGEARSATLPLPEVILEQVRAGEALGPVMSQYTGIDQIGRKEGAIGVFTGGKLTRSSVYHQAVVLALSPFHNAIYR.

8–13 provides a ligand contact to substrate; it reads TTNPAK. Glu38 is a Mg(2+) binding site.

Belongs to the YjjX NTPase family. Homodimer. Mg(2+) serves as cofactor. Requires Mn(2+) as cofactor.

It carries out the reaction XTP + H2O = XDP + phosphate + H(+). The enzyme catalyses ITP + H2O = IDP + phosphate + H(+). In terms of biological role, phosphatase that hydrolyzes non-canonical purine nucleotides such as XTP and ITP to their respective diphosphate derivatives. Probably excludes non-canonical purines from DNA/RNA precursor pool, thus preventing their incorporation into DNA/RNA and avoiding chromosomal lesions. This Klebsiella pneumoniae (strain 342) protein is Inosine/xanthosine triphosphatase.